We begin with the raw amino-acid sequence, 431 residues long: STE20-related kinase adapter protein alpha (431 aa).

2 positions are modified to phosphoserine: S2 and S46. The 311-residue stretch at Y69–F379 folds into the Protein kinase domain. Residues L310–T347 are disordered. Over residues M312–S339 the composition is skewed to polar residues. Phosphothreonine; by LKB1 is present on residues T329 and T401. T419 is modified (phosphothreonine).

The protein belongs to the protein kinase superfamily. STE Ser/Thr protein kinase family. STE20 subfamily. Component of a trimeric complex composed of STK11/LKB1, STRAD (STRADA or STRADB) and CAB39/MO25 (CAB39/MO25alpha or CAB39L/MO25beta): the complex tethers STK11/LKB1 in the cytoplasm and stimulates its catalytic activity.

The protein resides in the nucleus. The protein localises to the cytoplasm. Functionally, pseudokinase which, in complex with CAB39/MO25 (CAB39/MO25alpha or CAB39L/MO25beta), binds to and activates STK11/LKB1. Adopts a closed conformation typical of active protein kinases and binds STK11/LKB1 as a pseudosubstrate, promoting conformational change of STK11/LKB1 in an active conformation. This chain is STE20-related kinase adapter protein alpha (STRADA), found in Pongo abelii (Sumatran orangutan).